The sequence spans 291 residues: Lipoyl synthase (291 aa).

Positions 35, 40, 46, 61, 65, 68, and 273 each coordinate [4Fe-4S] cluster. The region spanning 47-262 is the Radical SAM core domain; it reads FGKRQATFLI…KEKALAMGFE (216 aa).

This sequence belongs to the radical SAM superfamily. Lipoyl synthase family. Requires [4Fe-4S] cluster as cofactor.

The protein resides in the cytoplasm. The enzyme catalyses [[Fe-S] cluster scaffold protein carrying a second [4Fe-4S](2+) cluster] + N(6)-octanoyl-L-lysyl-[protein] + 2 oxidized [2Fe-2S]-[ferredoxin] + 2 S-adenosyl-L-methionine + 4 H(+) = [[Fe-S] cluster scaffold protein] + N(6)-[(R)-dihydrolipoyl]-L-lysyl-[protein] + 4 Fe(3+) + 2 hydrogen sulfide + 2 5'-deoxyadenosine + 2 L-methionine + 2 reduced [2Fe-2S]-[ferredoxin]. The protein operates within protein modification; protein lipoylation via endogenous pathway; protein N(6)-(lipoyl)lysine from octanoyl-[acyl-carrier-protein]: step 2/2. In terms of biological role, catalyzes the radical-mediated insertion of two sulfur atoms into the C-6 and C-8 positions of the octanoyl moiety bound to the lipoyl domains of lipoate-dependent enzymes, thereby converting the octanoylated domains into lipoylated derivatives. The chain is Lipoyl synthase from Geobacter sp. (strain M21).